The sequence spans 515 residues: Spermatogenesis-associated protein 2 (515 aa).

Residues 78 to 150 form the PUB domain; sequence ALHCAFSMLE…VYKLKELVES (73 aa). The PIM motif signature appears at 321-338; sequence TYFSTQDDVDLYTDSEPR. Positions 429–452 are disordered; the sequence is GHQTQGLDRLAPVHSKPKPSTTAT.

The protein belongs to the SPATA2 family. In terms of assembly, interacts (via the PIM motif) with RNF31/HOIP (via the PUB domain); the interaction is direct. Interacts (via the PUB domain) with CYLD; the interaction is direct. In terms of tissue distribution, widely expressed, with highest expression in testis, lung and intestine, and lower expression in brain, heart and spleen. Present at high level in Sertoli cells: expressed from stage I to stage XII of the testis seminiferous epithelium (at protein level).

The protein resides in the cytoplasm. Its subcellular location is the nucleus. Functionally, bridging factor that mediates the recruitment of CYLD to the LUBAC complex, thereby regulating TNF-alpha-induced necroptosis. Acts as a direct binding intermediate that bridges RNF31/HOIP, the catalytic subunit of the LUBAC complex, and the deubiquitinase (CYLD), thereby recruiting CYLD to the TNF-R1 signaling complex (TNF-RSC). Required to activate the 'Met-1'- (linear) and 'Lys-63'-linked deubiquitinase activities of CYLD. Controls the kinase activity of RIPK1 and TNF-alpha-induced necroptosis by promoting 'Met-1'-linked deubiquitination of RIPK1 by CYLD. The protein is Spermatogenesis-associated protein 2 of Mus musculus (Mouse).